Reading from the N-terminus, the 607-residue chain is DNA mismatch repair protein MutL (607 aa).

It belongs to the DNA mismatch repair MutL/HexB family.

Functionally, this protein is involved in the repair of mismatches in DNA. It is required for dam-dependent methyl-directed DNA mismatch repair. May act as a 'molecular matchmaker', a protein that promotes the formation of a stable complex between two or more DNA-binding proteins in an ATP-dependent manner without itself being part of a final effector complex. The chain is DNA mismatch repair protein MutL from Anaeromyxobacter sp. (strain K).